The sequence spans 416 residues: Serine/threonine transporter SstT (416 aa).

9 helical membrane-spanning segments follow: residues 14-34, 43-63, 82-102, 141-161, 192-212, 220-240, 298-318, 339-359, and 363-383; these read GSIVLQIMFGLVAGMALALLS, FLGTLFVKALKGVAPVLVFVL, VLVLYLVGTFLAALVGVVASF, ALATGNFIGILAWAAALGVAL, IGVFGLVADAIATTGFSALMG, LLGSMLFIALVVNPLIVFLAI, MAGAAITISVLSLAAVHTLGV, ASGVAGGSLLLIPLACSLFGI, and VAMQMVAVGFIIGVIQDSAET.

The protein belongs to the dicarboxylate/amino acid:cation symporter (DAACS) (TC 2.A.23) family.

It localises to the cell inner membrane. The enzyme catalyses L-serine(in) + Na(+)(in) = L-serine(out) + Na(+)(out). It carries out the reaction L-threonine(in) + Na(+)(in) = L-threonine(out) + Na(+)(out). Its function is as follows. Involved in the import of serine and threonine into the cell, with the concomitant import of sodium (symport system). In Laribacter hongkongensis (strain HLHK9), this protein is Serine/threonine transporter SstT.